The sequence spans 1008 residues: Kinesin-like protein KIN-5C (1008 aa).

Residues 12–359 enclose the Kinesin motor domain; the sequence is NVQVLLRCRP…LDYAHRAKSI (348 aa). 98-105 is a binding site for ATP; it reads GQTGTGKT. Residues 402-459 adopt a coiled-coil conformation; that stretch reads KDRYQQEENERKAMADQIEQMTTSLEANQKQINDLQEKYDSELQHSADLSKKLEATEK. Disordered regions lie at residues 910-931, 943-962, and 975-1008; these read VEAH…TAGI, YKDY…EVPS, and ESLM…TINN. Basic and acidic residues predominate over residues 913–925; that stretch reads HLGESQHLQESHS. A compositionally biased stretch (basic and acidic residues) spans 979 to 995; the sequence is DEFRENHPYEPSKDRRP.

It belongs to the TRAFAC class myosin-kinesin ATPase superfamily. Kinesin family. KIN-5/BimC subfamily.

The protein resides in the cytoplasm. Its subcellular location is the cytoskeleton. It localises to the spindle. Responsible for microtubule translocation. May be important for the organization of phragmoplast-specific arrays of microtubules. Plays an essential role in stabilizing the mitotic spindle. Required during mitotic cytokinesis. This Oryza sativa subsp. japonica (Rice) protein is Kinesin-like protein KIN-5C.